Consider the following 417-residue polypeptide: Fatty-acid peroxygenase (417 aa).

Residue Cys-363 coordinates heme.

It belongs to the cytochrome P450 family. Heme is required as a cofactor.

The enzyme catalyses a 1,2-saturated fatty acid + H2O2 = a 2-hydroxy fatty acid + H2O. It carries out the reaction a 2,3-saturated fatty acid + H2O2 = a 3-hydroxy fatty acid + H2O. It catalyses the reaction tetradecanoate + H2O2 = (3R)-hydroxytetradecanoate + H2O. The catalysed reaction is tetradecanoate + H2O2 = (2R)-hydroxytetradecanoate + H2O. The enzyme catalyses tetradecanoate + H2O2 = (2S)-hydroxytetradecanoate + H2O. In terms of biological role, catalyzes the alpha- and beta-hydroxylation of myristic acid in the presence of hydrogen peroxide. The polypeptide is Fatty-acid peroxygenase (cypC) (Bacillus subtilis (strain 168)).